A 546-amino-acid polypeptide reads, in one-letter code: Membrane protein insertase YidC (546 aa).

The chain crosses the membrane as a helical span at residues 8 to 28 (ILLATVLSVGILILWQVIFPT). Positions 31-70 (VPPKPAPPPAAEVAKPAAPASPAPGAAAPAVPAPPPDAPE) are disordered. A compositionally biased stretch (low complexity) spans 41–60 (AEVAKPAAPASPAPGAAAPA). The next 5 membrane-spanning stretches (helical) occupy residues 326–346 (IDYG…LYVM), 356–376 (WGVA…PLTY), 422–442 (LGGC…YAAL), 459–479 (LTAH…SFVM), and 498–518 (FFPG…TLYI).

The protein belongs to the OXA1/ALB3/YidC family. Type 1 subfamily. As to quaternary structure, interacts with the Sec translocase complex via SecD. Specifically interacts with transmembrane segments of nascent integral membrane proteins during membrane integration.

It localises to the cell inner membrane. Functionally, required for the insertion and/or proper folding and/or complex formation of integral membrane proteins into the membrane. Involved in integration of membrane proteins that insert both dependently and independently of the Sec translocase complex, as well as at least some lipoproteins. Aids folding of multispanning membrane proteins. The polypeptide is Membrane protein insertase YidC (Anaeromyxobacter sp. (strain K)).